A 303-amino-acid chain; its full sequence is 2-dehydropantoate 2-reductase (303 aa).

NADP(+) contacts are provided by residues 7 to 12 (GCGALG), asparagine 98, and alanine 122. Residue asparagine 98 participates in substrate binding. Lysine 176 acts as the Proton donor in catalysis. Substrate is bound by residues asparagine 180, asparagine 184, asparagine 194, and serine 244. Residue glutamate 256 participates in NADP(+) binding.

The protein belongs to the ketopantoate reductase family. As to quaternary structure, monomer.

The protein resides in the cytoplasm. The enzyme catalyses (R)-pantoate + NADP(+) = 2-dehydropantoate + NADPH + H(+). Its pathway is cofactor biosynthesis; (R)-pantothenate biosynthesis; (R)-pantoate from 3-methyl-2-oxobutanoate: step 2/2. Its function is as follows. Catalyzes the NADPH-dependent reduction of ketopantoate into pantoic acid. This is 2-dehydropantoate 2-reductase (panE) from Escherichia coli O157:H7.